We begin with the raw amino-acid sequence, 473 residues long: Glutamate--tRNA ligase (473 aa).

The 'HIGH' region signature appears at 13 to 23 (PSPTGFLHVGG). The 'KMSKS' region motif lies at 240 to 244 (KLSKR). Lysine 243 is an ATP binding site.

It belongs to the class-I aminoacyl-tRNA synthetase family. Glutamate--tRNA ligase type 1 subfamily. In terms of assembly, monomer.

Its subcellular location is the cytoplasm. The enzyme catalyses tRNA(Glu) + L-glutamate + ATP = L-glutamyl-tRNA(Glu) + AMP + diphosphate. In terms of biological role, catalyzes the attachment of glutamate to tRNA(Glu) in a two-step reaction: glutamate is first activated by ATP to form Glu-AMP and then transferred to the acceptor end of tRNA(Glu). The chain is Glutamate--tRNA ligase from Shewanella denitrificans (strain OS217 / ATCC BAA-1090 / DSM 15013).